A 432-amino-acid polypeptide reads, in one-letter code: UDP-N-acetylglucosamine 1-carboxyvinyltransferase (432 aa).

Position 22–23 (22–23) interacts with phosphoenolpyruvate; sequence KN. Residue arginine 96 coordinates UDP-N-acetyl-alpha-D-glucosamine. Cysteine 120 acts as the Proton donor in catalysis. Cysteine 120 carries the 2-(S-cysteinyl)pyruvic acid O-phosphothioketal modification. UDP-N-acetyl-alpha-D-glucosamine is bound by residues 125-129, aspartate 310, and isoleucine 332; that span reads RPVDL.

Belongs to the EPSP synthase family. MurA subfamily.

The protein resides in the cytoplasm. It catalyses the reaction phosphoenolpyruvate + UDP-N-acetyl-alpha-D-glucosamine = UDP-N-acetyl-3-O-(1-carboxyvinyl)-alpha-D-glucosamine + phosphate. The protein operates within cell wall biogenesis; peptidoglycan biosynthesis. Cell wall formation. Adds enolpyruvyl to UDP-N-acetylglucosamine. This is UDP-N-acetylglucosamine 1-carboxyvinyltransferase from Caulobacter sp. (strain K31).